We begin with the raw amino-acid sequence, 236 residues long: Putative lipoprotein MlpA (236 aa).

Positions 1 to 21 (MTKNIVNTALVLVGAGSLLTG) are cleaved as a signal peptide. Residue cysteine 22 is the site of N-palmitoyl cysteine attachment. Cysteine 22 carries the S-diacylglycerol cysteine lipid modification.

The protein resides in the cell membrane. This is Putative lipoprotein MlpA (mlpA) from Myxococcus xanthus.